A 321-amino-acid polypeptide reads, in one-letter code: Aspartate carbamoyltransferase catalytic subunit (321 aa).

Carbamoyl phosphate is bound by residues Arg-65 and Thr-66. Lys-93 is a binding site for L-aspartate. Carbamoyl phosphate is bound by residues Arg-115, His-143, and Gln-146. The L-aspartate site is built by Arg-176 and Arg-230. Residues Gly-271 and Pro-272 each contribute to the carbamoyl phosphate site.

It belongs to the aspartate/ornithine carbamoyltransferase superfamily. ATCase family. Heterododecamer (2C3:3R2) of six catalytic PyrB chains organized as two trimers (C3), and six regulatory PyrI chains organized as three dimers (R2).

It carries out the reaction carbamoyl phosphate + L-aspartate = N-carbamoyl-L-aspartate + phosphate + H(+). Its pathway is pyrimidine metabolism; UMP biosynthesis via de novo pathway; (S)-dihydroorotate from bicarbonate: step 2/3. Its function is as follows. Catalyzes the condensation of carbamoyl phosphate and aspartate to form carbamoyl aspartate and inorganic phosphate, the committed step in the de novo pyrimidine nucleotide biosynthesis pathway. The chain is Aspartate carbamoyltransferase catalytic subunit from Bartonella henselae (strain ATCC 49882 / DSM 28221 / CCUG 30454 / Houston 1) (Rochalimaea henselae).